The primary structure comprises 332 residues: Fructose-1,6-bisphosphatase class 1 (332 aa).

Mg(2+) is bound by residues glutamate 89, aspartate 110, leucine 112, and aspartate 113. Substrate contacts are provided by residues 113–116 (DGSS), asparagine 206, tyrosine 239, 257–259 (YLY), and lysine 269. Residue glutamate 275 coordinates Mg(2+).

This sequence belongs to the FBPase class 1 family. As to quaternary structure, homotetramer. The cofactor is Mg(2+).

It is found in the cytoplasm. It carries out the reaction beta-D-fructose 1,6-bisphosphate + H2O = beta-D-fructose 6-phosphate + phosphate. It participates in carbohydrate biosynthesis; gluconeogenesis. This Salmonella typhi protein is Fructose-1,6-bisphosphatase class 1.